Here is a 615-residue protein sequence, read N- to C-terminus: Chaperone protein DnaK (615 aa).

Residue Thr195 is modified to Phosphothreonine; by autocatalysis. The tract at residues 592-615 (EKGAQAASGKGPDDVIDADYKPAD) is disordered.

The protein belongs to the heat shock protein 70 family.

Acts as a chaperone. In Thermus thermophilus (strain ATCC BAA-163 / DSM 7039 / HB27), this protein is Chaperone protein DnaK.